The sequence spans 206 residues: MKTTVKNLNNETVGEIELADEVFGLPTRQDILTRMVLWQLAKRRQGTHKTKGISEIAGTTKKPWRQKGTGRARQGSTRSPQFRGGARIFGPVVRSHEHDLTKKVRKLALKTALSTKAAEGKLFVLEAAKADTHKTKALAAQLKTLGLTSALIIDGANLDETFVRAARNIPHLDVLPEQGANVYDILRRDVLVLTRNAVEQLEARLK.

The segment at 62–85 (KPWRQKGTGRARQGSTRSPQFRGG) is disordered.

It belongs to the universal ribosomal protein uL4 family. As to quaternary structure, part of the 50S ribosomal subunit.

Functionally, one of the primary rRNA binding proteins, this protein initially binds near the 5'-end of the 23S rRNA. It is important during the early stages of 50S assembly. It makes multiple contacts with different domains of the 23S rRNA in the assembled 50S subunit and ribosome. In terms of biological role, forms part of the polypeptide exit tunnel. In Rhodospirillum centenum (strain ATCC 51521 / SW), this protein is Large ribosomal subunit protein uL4.